The chain runs to 115 residues: Large ribosomal subunit protein uL18 (115 aa).

This sequence belongs to the universal ribosomal protein uL18 family. As to quaternary structure, part of the 50S ribosomal subunit; part of the 5S rRNA/L5/L18/L25 subcomplex. Contacts the 5S and 23S rRNAs.

This is one of the proteins that bind and probably mediate the attachment of the 5S RNA into the large ribosomal subunit, where it forms part of the central protuberance. The protein is Large ribosomal subunit protein uL18 of Ruthia magnifica subsp. Calyptogena magnifica.